We begin with the raw amino-acid sequence, 114 residues long: Photosystem II reaction center Psb28 protein (114 aa).

This sequence belongs to the Psb28 family. Part of the photosystem II complex.

The protein localises to the cellular thylakoid membrane. The polypeptide is Photosystem II reaction center Psb28 protein (Rippkaea orientalis (strain PCC 8801 / RF-1) (Cyanothece sp. (strain PCC 8801))).